The primary structure comprises 180 residues: Large ribosomal subunit protein uL6c (180 aa).

Belongs to the universal ribosomal protein uL6 family. In terms of assembly, part of the 50S ribosomal subunit.

The protein localises to the plastid. It is found in the chloroplast. In terms of biological role, binds 23S rRNA. The protein is Large ribosomal subunit protein uL6c (rpl6) of Porphyra purpurea (Red seaweed).